The sequence spans 286 residues: Small ribosomal subunit protein uS2 (286 aa).

The tract at residues 231 to 286 (ERAQAEAKAAAGDNDAPVSSEGESTEVASDAASTASETTATSSDESAAESSEAESK) is disordered. Residues 255–280 (TEVASDAASTASETTATSSDESAAES) are compositionally biased toward low complexity.

It belongs to the universal ribosomal protein uS2 family.

The protein is Small ribosomal subunit protein uS2 of Corynebacterium kroppenstedtii (strain DSM 44385 / JCM 11950 / CIP 105744 / CCUG 35717).